Here is a 427-residue protein sequence, read N- to C-terminus: 3-phosphoshikimate 1-carboxyvinyltransferase (427 aa).

3-phosphoshikimate-binding residues include lysine 23, serine 24, and arginine 28. Lysine 23 is a phosphoenolpyruvate binding site. Residues glycine 97 and arginine 125 each coordinate phosphoenolpyruvate. Positions 170, 171, 172, 198, 314, 337, and 341 each coordinate 3-phosphoshikimate. Position 172 (glutamine 172) interacts with phosphoenolpyruvate. Catalysis depends on aspartate 314, which acts as the Proton acceptor. The phosphoenolpyruvate site is built by arginine 345, arginine 387, and lysine 412.

This sequence belongs to the EPSP synthase family. In terms of assembly, monomer.

It localises to the cytoplasm. It carries out the reaction 3-phosphoshikimate + phosphoenolpyruvate = 5-O-(1-carboxyvinyl)-3-phosphoshikimate + phosphate. It functions in the pathway metabolic intermediate biosynthesis; chorismate biosynthesis; chorismate from D-erythrose 4-phosphate and phosphoenolpyruvate: step 6/7. Functionally, catalyzes the transfer of the enolpyruvyl moiety of phosphoenolpyruvate (PEP) to the 5-hydroxyl of shikimate-3-phosphate (S3P) to produce enolpyruvyl shikimate-3-phosphate and inorganic phosphate. The sequence is that of 3-phosphoshikimate 1-carboxyvinyltransferase from Buchnera aphidicola subsp. Baizongia pistaciae (strain Bp).